The sequence spans 309 residues: Sulfate adenylyltransferase subunit 2 (309 aa).

Belongs to the PAPS reductase family. CysD subfamily. Heterodimer composed of CysD, the smaller subunit, and CysN.

It catalyses the reaction sulfate + ATP + H(+) = adenosine 5'-phosphosulfate + diphosphate. It participates in sulfur metabolism; hydrogen sulfide biosynthesis; sulfite from sulfate: step 1/3. Its function is as follows. With CysN forms the ATP sulfurylase (ATPS) that catalyzes the adenylation of sulfate producing adenosine 5'-phosphosulfate (APS) and diphosphate, the first enzymatic step in sulfur assimilation pathway. APS synthesis involves the formation of a high-energy phosphoric-sulfuric acid anhydride bond driven by GTP hydrolysis by CysN coupled to ATP hydrolysis by CysD. The polypeptide is Sulfate adenylyltransferase subunit 2 (Mycolicibacterium vanbaalenii (strain DSM 7251 / JCM 13017 / BCRC 16820 / KCTC 9966 / NRRL B-24157 / PYR-1) (Mycobacterium vanbaalenii)).